Reading from the N-terminus, the 504-residue chain is Glucose-6-phosphate isomerase (504 aa).

Glu-333 (proton donor) is an active-site residue. Residues His-364 and Lys-473 contribute to the active site.

This sequence belongs to the GPI family.

It localises to the cytoplasm. It carries out the reaction alpha-D-glucose 6-phosphate = beta-D-fructose 6-phosphate. It functions in the pathway carbohydrate biosynthesis; gluconeogenesis. It participates in carbohydrate degradation; glycolysis; D-glyceraldehyde 3-phosphate and glycerone phosphate from D-glucose: step 2/4. In terms of biological role, catalyzes the reversible isomerization of glucose-6-phosphate to fructose-6-phosphate. The sequence is that of Glucose-6-phosphate isomerase from Xanthomonas oryzae pv. oryzae (strain MAFF 311018).